Consider the following 629-residue polypeptide: MLLSELSHPNQLHGLTVSQLEEIACQIRERHLQVVSTSGGHLGPGLGVVELTLALYQTLDLDFDKVVWDVGHQGYPHKLITGRFSQFDSLRQQNGVAGYLKRSESKFDHFGAGHASTSISAALGMAIARDRKGENYKCVAVIGDGALTGGMALEAINHAGHLPNTPLVVVLNDNDMSISPPVGALSSYLNKVRVSPPLQFLSDSVQESVKNIPLIGKDIPEELKNIKGSVRRLSVPKVGAVFEELGFTYMGPIEGHDIANLIKTFNAAHKLKRPVLVHVVTTKGKGYPYAEADQVGYHAQSAFDLTTGKSIPSKKPKPVSYSKIFGQTLLKICEQDSKVIGITAAMATGTGLDILQKNIPDQYIDVGIAEQHAVTLAAGMSCDGLKPVVAIYSTFLQRAFDQLIHDVGIQNLPVSFVLDRAGIVGADGPTHQGQYDISYMRSIPNFVLMAPKDESELQRMLITSINHNGPTALRIPRGSGLGVAVMDEGWEPMNIGEAEILEEGEDILIIAYGSMVASAIETAKILKNMNINACIVNARFVKPLDKNLIMPLASRIQKVVTMEEGTLIGGFGSAIVELFNDNEINIPVYRIGIPDVLVDHASPDQSKEKLGLLPDQMADKIIKKFKLVI.

Residues H72 and 113–115 (GHA) contribute to the thiamine diphosphate site. D144 provides a ligand contact to Mg(2+). Residues 145 to 146 (GA), N174, Y287, and E370 each bind thiamine diphosphate. N174 contacts Mg(2+).

This sequence belongs to the transketolase family. DXPS subfamily. Homodimer. Mg(2+) serves as cofactor. It depends on thiamine diphosphate as a cofactor.

It catalyses the reaction D-glyceraldehyde 3-phosphate + pyruvate + H(+) = 1-deoxy-D-xylulose 5-phosphate + CO2. It functions in the pathway metabolic intermediate biosynthesis; 1-deoxy-D-xylulose 5-phosphate biosynthesis; 1-deoxy-D-xylulose 5-phosphate from D-glyceraldehyde 3-phosphate and pyruvate: step 1/1. Its function is as follows. Catalyzes the acyloin condensation reaction between C atoms 2 and 3 of pyruvate and glyceraldehyde 3-phosphate to yield 1-deoxy-D-xylulose-5-phosphate (DXP). The chain is 1-deoxy-D-xylulose-5-phosphate synthase from Prochlorococcus marinus (strain AS9601).